The chain runs to 197 residues: 3-isopropylmalate dehydratase small subunit (197 aa).

This sequence belongs to the LeuD family. LeuD type 1 subfamily. In terms of assembly, heterodimer of LeuC and LeuD.

The enzyme catalyses (2R,3S)-3-isopropylmalate = (2S)-2-isopropylmalate. It participates in amino-acid biosynthesis; L-leucine biosynthesis; L-leucine from 3-methyl-2-oxobutanoate: step 2/4. Its function is as follows. Catalyzes the isomerization between 2-isopropylmalate and 3-isopropylmalate, via the formation of 2-isopropylmaleate. This is 3-isopropylmalate dehydratase small subunit from Mycobacterium sp. (strain JLS).